Here is a 158-residue protein sequence, read N- to C-terminus: Serglycin (158 aa).

An N-terminal signal peptide occupies residues M1–G27. The cysteines at positions 40 and 49 are disulfide-linked. O-linked (Xyl...) (glycosaminoglycan) serine glycans are attached at residues S94 and S96. 9 tandem repeats follow at residues S94–G95, S96–G97, F98–G99, S100–G101, S102–G103, S104–G105, S106–G107, S108–G109, and S110–G111. The 9 X 2 AA tandem repeats of [SF]-G stretch occupies residues S94 to G111. O-linked (Xyl...) (glycosaminoglycan) serine glycans are attached at residues S100, S102, S104, S106, S108, and S110. The segment at R134–L158 is disordered.

This sequence belongs to the serglycin family. Binds to activated CD44 and to GZMB. O-glycosylated; contains chondroitin sulfate and heparan sulfate.

The protein resides in the cytoplasmic granule. It localises to the cytolytic granule. It is found in the secreted. Its subcellular location is the extracellular space. The protein localises to the golgi apparatus. Its function is as follows. Plays a role in formation of mast cell secretory granules and mediates storage of various compounds in secretory vesicles. Required for storage of some proteases in both connective tissue and mucosal mast cells and for storage of granzyme B in T-lymphocytes. Plays a role in localizing neutrophil elastase in azurophil granules of neutrophils. Mediates processing of MMP2. Plays a role in cytotoxic cell granule-mediated apoptosis by forming a complex with granzyme B which is delivered to cells by perforin to induce apoptosis. Regulates the secretion of TNF-alpha and may also regulate protease secretion. Inhibits bone mineralization. In Homo sapiens (Human), this protein is Serglycin (SRGN).